We begin with the raw amino-acid sequence, 528 residues long: Phosphoenolpyruvate carboxykinase (ATP) (528 aa).

Substrate is bound by residues R56, Y192, and K198. ATP contacts are provided by residues K198, H217, and 233 to 241; that span reads GLSGTGKTT. Mn(2+) contacts are provided by K198 and H217. A Mn(2+)-binding site is contributed by D254. 3 residues coordinate ATP: E282, R319, and T444. Position 319 (R319) interacts with substrate.

It belongs to the phosphoenolpyruvate carboxykinase (ATP) family. Mn(2+) serves as cofactor.

Its subcellular location is the cytoplasm. The catalysed reaction is oxaloacetate + ATP = phosphoenolpyruvate + ADP + CO2. The protein operates within carbohydrate biosynthesis; gluconeogenesis. Functionally, involved in the gluconeogenesis. Catalyzes the conversion of oxaloacetate (OAA) to phosphoenolpyruvate (PEP) through direct phosphoryl transfer between the nucleoside triphosphate and OAA. The sequence is that of Phosphoenolpyruvate carboxykinase (ATP) from Bacillus mycoides (strain KBAB4) (Bacillus weihenstephanensis).